A 124-amino-acid polypeptide reads, in one-letter code: Small ribosomal subunit protein uS10 (124 aa).

The protein belongs to the universal ribosomal protein uS10 family.

The polypeptide is Small ribosomal subunit protein uS10 (rps20) (Dictyostelium discoideum (Social amoeba)).